The chain runs to 256 residues: MLNIGPFSFHSRLLLGTGKFPDFDVQQKAIDVSEAEVLTFAVRRMDIFDAKQPNLLEKLDVKKYTLLPNTAGAKNAEEAVRIAKLAKASGLCDMIKVEVIGDDRTLLPDPVETLKASEMLLEEGFIVLPYTSDDVVLARKLQELGVHAIMPGASPIGSGLGIVNPLNLSFIIEQATVPVIVDAGIGSPADAAFAMELGADGVLLNTAVSGAKDPIKMAQAMKLSIEAGRLGFEAGRIGRKRCATASSPLEGMSVVE.

Lys96 serves as the catalytic Schiff-base intermediate with DXP. 1-deoxy-D-xylulose 5-phosphate is bound by residues Gly157, 183 to 184, and 205 to 206; these read AG and NT.

The protein belongs to the ThiG family. As to quaternary structure, homotetramer. Forms heterodimers with either ThiH or ThiS.

It localises to the cytoplasm. The enzyme catalyses [ThiS sulfur-carrier protein]-C-terminal-Gly-aminoethanethioate + 2-iminoacetate + 1-deoxy-D-xylulose 5-phosphate = [ThiS sulfur-carrier protein]-C-terminal Gly-Gly + 2-[(2R,5Z)-2-carboxy-4-methylthiazol-5(2H)-ylidene]ethyl phosphate + 2 H2O + H(+). It participates in cofactor biosynthesis; thiamine diphosphate biosynthesis. Functionally, catalyzes the rearrangement of 1-deoxy-D-xylulose 5-phosphate (DXP) to produce the thiazole phosphate moiety of thiamine. Sulfur is provided by the thiocarboxylate moiety of the carrier protein ThiS. In vitro, sulfur can be provided by H(2)S. The sequence is that of Thiazole synthase from Bacillus cereus (strain ATCC 10987 / NRS 248).